Reading from the N-terminus, the 106-residue chain is UPF0145 protein NE1032 (106 aa).

Belongs to the UPF0145 family.

The polypeptide is UPF0145 protein NE1032 (Nitrosomonas europaea (strain ATCC 19718 / CIP 103999 / KCTC 2705 / NBRC 14298)).